An 87-amino-acid chain; its full sequence is Small ribosomal subunit protein bS18 (87 aa).

Belongs to the bacterial ribosomal protein bS18 family. As to quaternary structure, part of the 30S ribosomal subunit. Forms a tight heterodimer with protein bS6.

Its function is as follows. Binds as a heterodimer with protein bS6 to the central domain of the 16S rRNA, where it helps stabilize the platform of the 30S subunit. The chain is Small ribosomal subunit protein bS18 from Oleidesulfovibrio alaskensis (strain ATCC BAA-1058 / DSM 17464 / G20) (Desulfovibrio alaskensis).